The chain runs to 284 residues: Zinc finger protein ZAT3 (284 aa).

Basic and acidic residues predominate over residues 1 to 12; it reads MNNNHSYDDRSF. A disordered region spans residues 1–76; sequence MNNNHSYDDR…KPDPNAPKIT (76 aa). Residues 18–37 are compositionally biased toward polar residues; that stretch reads PSNTSNPNPNLQFALSSSYD. Residues 47–62 are compositionally biased toward low complexity; that stretch reads TVASSSSSSPKSASKP. 3 consecutive C2H2-type zinc fingers follow at residues 77-99, 162-184, and 222-244; these read RPCTECGRKFWSWKALFGHMRCH, FECGGCKKVFGSHQALGGHRASH, and HKCNICFRVFSSGQALGGHMRCH.

As to quaternary structure, interacts (via the EAR motif) with TPL. Expressed exclusively in pollen.

The protein resides in the nucleus. Its function is as follows. Mediates the regulation of male germ cell division by DUO1. The chain is Zinc finger protein ZAT3 from Arabidopsis thaliana (Mouse-ear cress).